The primary structure comprises 227 residues: Probable septum site-determining protein MinC (227 aa).

It belongs to the MinC family. Interacts with MinD and FtsZ.

In terms of biological role, cell division inhibitor that blocks the formation of polar Z ring septums. Rapidly oscillates between the poles of the cell to destabilize FtsZ filaments that have formed before they mature into polar Z rings. Prevents FtsZ polymerization. This is Probable septum site-determining protein MinC from Photorhabdus laumondii subsp. laumondii (strain DSM 15139 / CIP 105565 / TT01) (Photorhabdus luminescens subsp. laumondii).